Reading from the N-terminus, the 173-residue chain is Translation initiation factor IF-3 (173 aa).

This sequence belongs to the IF-3 family. Monomer.

It localises to the cytoplasm. IF-3 binds to the 30S ribosomal subunit and shifts the equilibrium between 70S ribosomes and their 50S and 30S subunits in favor of the free subunits, thus enhancing the availability of 30S subunits on which protein synthesis initiation begins. The protein is Translation initiation factor IF-3 of Parvibaculum lavamentivorans (strain DS-1 / DSM 13023 / NCIMB 13966).